Here is a 304-residue protein sequence, read N- to C-terminus: N-acetyllactosaminide alpha-2,3-sialyltransferase (304 aa).

CMP-N-acetyl-beta-neuraminate contacts are provided by residues 221–225, 242–243, and 262–263; these read FPHPA, FE, and SS. Residue histidine 223 is the Proton donor of the active site.

This sequence belongs to the glycosyltransferase 52 family.

The enzyme catalyses a beta-D-galactosyl-(1-&gt;4)-N-acetyl-beta-D-glucosaminyl derivative + CMP-N-acetyl-beta-neuraminate = an N-acetyl-alpha-neuraminyl-(2-&gt;3)-beta-D-galactosyl-(1-&gt;4)-N-acetyl-beta-D-glucosaminyl derivative + CMP + H(+). It functions in the pathway bacterial outer membrane biogenesis; lipooligosaccharide biosynthesis. Functionally, catalyzes the transfer of sialic acid from the substrate CMP-N-acetylneuraminate to the terminal galactose residue of the N-acetyllactosamine moiety of surface lipooligosaccharide (LOS). Thus, functions in the sialylation of LOS, which plays a role in the evasion of the host immune response. The sequence is that of N-acetyllactosaminide alpha-2,3-sialyltransferase from Haemophilus influenzae (strain ATCC 51907 / DSM 11121 / KW20 / Rd).